Consider the following 1608-residue polypeptide: Hemolysin (1608 aa).

The signal sequence occupies residues 1 to 30; sequence MKNNNFRLSAAGKLAAALAIILAASAGAYA. 6 disordered regions span residues 296 to 315, 452 to 488, 716 to 737, 971 to 1030, 1168 to 1199, and 1437 to 1469; these read SRVD…QNYR, KSSE…LRSE, EHTR…LSGG, AVNL…SASQ, AEST…TGGN, and PQQD…QGPL. Polar residues-rich tracts occupy residues 303 to 313 and 460 to 474; these read SNKNGGDNYQN and RNHT…WSNS. 2 stretches are compositionally biased toward basic and acidic residues: residues 478–488 and 716–726; these read ESLKASELRSE and EHTRDSEKTTR. The span at 727–736 shows a compositional bias: polar residues; the sequence is TENSASSLSG. Positions 977–996 are enriched in basic and acidic residues; that stretch reads DSHRSEAAANRQDEQSRDTR. Positions 1021–1030 are enriched in polar residues; the sequence is TQRSNSSASQ.

Its subcellular location is the cell outer membrane. Its function is as follows. Bacterial hemolysins are exotoxins that attack blood cell membranes and cause cell rupture by mechanisms not clearly defined. In terms of biological role, cell-bound hemolysin, which releases heme-iron from erythrocytes by interaction with the erythrocyte membrane. ShlA requires ShlB function. In Serratia marcescens, this protein is Hemolysin (shlA).